The primary structure comprises 393 residues: Telomeric repeat-binding factor 2-interacting protein 1 (393 aa).

Ala-2 is subject to N-acetylalanine. Residues Ser-36 and Ser-43 each carry the phosphoserine modification. A BRCT domain is found at 78–101 (FISTQYILDCVDRNEKLDLEAYRL). The tract at residues 104–132 (TEQASDPKPGASTEGSTEPEPQPLTGRIA) is disordered. Lys-111 is covalently cross-linked (Glycyl lysine isopeptide (Lys-Gly) (interchain with G-Cter in SUMO2)). Positions 125–185 (QPLTGRIAYT…SLKDRYLKHL (61 aa)) constitute a Myb-like domain. A phosphoserine mark is found at Ser-151 and Ser-153. A Glycyl lysine isopeptide (Lys-Gly) (interchain with G-Cter in SUMO2) cross-link involves residue Lys-191. Residues 193–304 (LLGNAPVSPS…EEEPKVSTQE (112 aa)) are disordered. Residues Ser-200 and Ser-203 each carry the phosphoserine modification. Residues Lys-205, Lys-209, and Lys-237 each participate in a glycyl lysine isopeptide (Lys-Gly) (interchain with G-Cter in SUMO2) cross-link. The segment covering 223 to 252 (QNKRAPDLPEEECVKGEIKENGEADNKLFE) has biased composition (basic and acidic residues). The span at 282–297 (TPEEDSETQPDEEEEE) shows a compositional bias: acidic residues. Residue Lys-366 forms a Glycyl lysine isopeptide (Lys-Gly) (interchain with G-Cter in SUMO2) linkage. A Nuclear localization signal motif is present at residues 377–393 (KKFGAQNVARRIEFRKK).

The protein belongs to the RAP1 family. In terms of assembly, homodimer. Component of the shelterin complex (telosome) composed of TERF1, TERF2, TINF2, TERF2IP ACD and POT1. Binds to TERF2 (but not TERF1) with its C-terminus. Interacts with SLX4/BTBD12. Interacts with TERF2; the interaction is direct. Does not interact with TERF1. Associates with the I-kappa-B-kinase (IKK) core complex, composed of CHUK, IKBKB and IKBKG.

Its subcellular location is the nucleus. It localises to the cytoplasm. It is found in the chromosome. The protein resides in the telomere. Acts both as a regulator of telomere function and as a transcription regulator. Involved in the regulation of telomere length and protection as a component of the shelterin complex (telosome). In contrast to other components of the shelterin complex, it is dispensible for telomere capping and does not participate in the protection of telomeres against non-homologous end-joining (NHEJ)-mediated repair. Instead, it is required to negatively regulate telomere recombination and is essential for repressing homology-directed repair (HDR), which can affect telomere length. Does not bind DNA directly: recruited to telomeric double-stranded 5'-TTAGGG-3' repeats via its interaction with TERF2. Independently of its function in telomeres, also acts as a transcription regulator: recruited to extratelomeric 5'-TTAGGG-3' sites via its association with TERF2 or other factors, and regulates gene expression. When cytoplasmic, associates with the I-kappa-B-kinase (IKK) complex and acts as a regulator of the NF-kappa-B signaling by promoting IKK-mediated phosphorylation of RELA/p65, leading to activate expression of NF-kappa-B target genes. In Mus musculus (Mouse), this protein is Telomeric repeat-binding factor 2-interacting protein 1 (Terf2ip).